We begin with the raw amino-acid sequence, 292 residues long: Fat storage-inducing transmembrane protein 1 (292 aa).

Over 1 to 18 (MERGPTVGAGLGAGTRVR) the chain is Lumenal. The helical transmembrane segment at 19-39 (ALLGCLVKVLLWVASALLYFG) threads the bilayer. At 40-54 (SEQAARLLGSPCLRR) the chain is on the cytoplasmic side. The chain crosses the membrane as a helical span at residues 55–75 (LYHAWLAAVVIFGPLLQFHVN). The Lumenal segment spans residues 76-94 (SRTIFASHGNFFNIKFVNS). The chain crosses the membrane as a helical span at residues 95–115 (AWGWTCTFLGGFVLLVVFLAT). Residues 116–141 (RRVAVTARHLSRLVVGAAVWRGAGRA) lie on the Cytoplasmic side of the membrane. The chain crosses the membrane as a helical span at residues 142 to 162 (FLLIEDLTGSCFEPLPQGLLL). The Lumenal segment spans residues 163-187 (HELPDRKSCLAAGHQWRGYTVSSHT). H186 is an active-site residue. Residues 188 to 208 (FLLTFCCLLMAEEAAVFAKYL) form a helical membrane-spanning segment. Topologically, residues 209-220 (AHGLPAGAPLRL) are cytoplasmic. A helical membrane pass occupies residues 221 to 241 (VFLLNVLLLGLWNFLLLCTVI). Residues 242-249 (YFHQYTHK) are Lumenal-facing. Residue H244 is part of the active site. A helical membrane pass occupies residues 250–270 (VVGAAVGTFAWYLTYGSWYHQ). The Cytoplasmic portion of the chain corresponds to 271 to 292 (PWSPGIPGHGLFPRSRSMRKHN).

This sequence belongs to the FIT family. FIT1 subfamily. In terms of tissue distribution, predominantly expressed in skeletal muscle and at lower levels in the heart (at protein level). In the heart, mRNA expression levels do not correlate well with protein levels, suggesting post-transcriptional regulation in this organ.

Its subcellular location is the endoplasmic reticulum membrane. Plays an important role in the formation of lipid droplets (LDs) which are storage organelles at the center of lipid and energy homeostasis. Directly binds to diacylglycerol (DAGs) and triacylglycerol. The protein is Fat storage-inducing transmembrane protein 1 of Mus musculus (Mouse).